Here is a 344-residue protein sequence, read N- to C-terminus: Holliday junction branch migration complex subunit RuvB (344 aa).

Positions 1-10 are enriched in low complexity; it reads MAIQSSSSGS. The interval 1 to 37 is disordered; sequence MAIQSSSSGSKPPAPKRLVAPEATAAEGDGGRDEGLR. Positions 13 to 197 are large ATPase domain (RuvB-L); it reads PAPKRLVAPE…FGLIQRLEFY (185 aa). Residues Leu-36, Arg-37, Gly-78, Lys-81, Thr-82, Thr-83, 144 to 146, Arg-187, Tyr-197, and Arg-234 each bind ATP; that span reads EDF. Residue Thr-82 participates in Mg(2+) binding. The segment at 198–268 is small ATPAse domain (RuvB-S); sequence SCSDLEAIVS…VVVEALAMHR (71 aa). Residues 271-344 form a head domain (RuvB-H) region; the sequence is GRGLDPSDRR…DAGRAHLEAA (74 aa). Residues Arg-326 and Arg-331 each coordinate DNA.

Belongs to the RuvB family. Homohexamer. Forms an RuvA(8)-RuvB(12)-Holliday junction (HJ) complex. HJ DNA is sandwiched between 2 RuvA tetramers; dsDNA enters through RuvA and exits via RuvB. An RuvB hexamer assembles on each DNA strand where it exits the tetramer. Each RuvB hexamer is contacted by two RuvA subunits (via domain III) on 2 adjacent RuvB subunits; this complex drives branch migration. In the full resolvosome a probable DNA-RuvA(4)-RuvB(12)-RuvC(2) complex forms which resolves the HJ.

It is found in the cytoplasm. The catalysed reaction is ATP + H2O = ADP + phosphate + H(+). Functionally, the RuvA-RuvB-RuvC complex processes Holliday junction (HJ) DNA during genetic recombination and DNA repair, while the RuvA-RuvB complex plays an important role in the rescue of blocked DNA replication forks via replication fork reversal (RFR). RuvA specifically binds to HJ cruciform DNA, conferring on it an open structure. The RuvB hexamer acts as an ATP-dependent pump, pulling dsDNA into and through the RuvAB complex. RuvB forms 2 homohexamers on either side of HJ DNA bound by 1 or 2 RuvA tetramers; 4 subunits per hexamer contact DNA at a time. Coordinated motions by a converter formed by DNA-disengaged RuvB subunits stimulates ATP hydrolysis and nucleotide exchange. Immobilization of the converter enables RuvB to convert the ATP-contained energy into a lever motion, pulling 2 nucleotides of DNA out of the RuvA tetramer per ATP hydrolyzed, thus driving DNA branch migration. The RuvB motors rotate together with the DNA substrate, which together with the progressing nucleotide cycle form the mechanistic basis for DNA recombination by continuous HJ branch migration. Branch migration allows RuvC to scan DNA until it finds its consensus sequence, where it cleaves and resolves cruciform DNA. The sequence is that of Holliday junction branch migration complex subunit RuvB from Synechococcus sp. (strain RCC307).